The following is a 176-amino-acid chain: Ribosome maturation factor RimP (176 aa).

The segment at 143-176 (LKPQTAKKKGRQEETEDMTLELDAVSRAVPEAEI) is disordered.

It belongs to the RimP family.

The protein localises to the cytoplasm. Its function is as follows. Required for maturation of 30S ribosomal subunits. This is Ribosome maturation factor RimP from Chlorobium luteolum (strain DSM 273 / BCRC 81028 / 2530) (Pelodictyon luteolum).